The following is a 511-amino-acid chain: GMP synthase [glutamine-hydrolyzing] (511 aa).

Positions 5–195 constitute a Glutamine amidotransferase type-1 domain; the sequence is DILVLDFGSQ…AKYACNCDSV (191 aa). Cys82 serves as the catalytic Nucleophile. Catalysis depends on residues His169 and Glu171. Residues 196 to 386 enclose the GMPS ATP-PPase domain; it reads WNMGSFAKTQ…LGLSKDVVYR (191 aa). ATP is bound at residue 223 to 229; it reads SGGVDSS.

Homodimer.

The catalysed reaction is XMP + L-glutamine + ATP + H2O = GMP + L-glutamate + AMP + diphosphate + 2 H(+). It participates in purine metabolism; GMP biosynthesis; GMP from XMP (L-Gln route): step 1/1. Functionally, catalyzes the synthesis of GMP from XMP. The polypeptide is GMP synthase [glutamine-hydrolyzing] (Campylobacter lari (strain RM2100 / D67 / ATCC BAA-1060)).